A 217-amino-acid polypeptide reads, in one-letter code: Imidazole glycerol phosphate synthase subunit HisH (217 aa).

Residues 6 to 214 (QIAVVDYDMG…VTQVAAAQLQ (209 aa)) enclose the Glutamine amidotransferase type-1 domain. Cys84 functions as the Nucleophile in the catalytic mechanism. Active-site residues include His189 and Glu191.

In terms of assembly, heterodimer of HisH and HisF.

It is found in the cytoplasm. The catalysed reaction is 5-[(5-phospho-1-deoxy-D-ribulos-1-ylimino)methylamino]-1-(5-phospho-beta-D-ribosyl)imidazole-4-carboxamide + L-glutamine = D-erythro-1-(imidazol-4-yl)glycerol 3-phosphate + 5-amino-1-(5-phospho-beta-D-ribosyl)imidazole-4-carboxamide + L-glutamate + H(+). It carries out the reaction L-glutamine + H2O = L-glutamate + NH4(+). It functions in the pathway amino-acid biosynthesis; L-histidine biosynthesis; L-histidine from 5-phospho-alpha-D-ribose 1-diphosphate: step 5/9. In terms of biological role, IGPS catalyzes the conversion of PRFAR and glutamine to IGP, AICAR and glutamate. The HisH subunit catalyzes the hydrolysis of glutamine to glutamate and ammonia as part of the synthesis of IGP and AICAR. The resulting ammonia molecule is channeled to the active site of HisF. This Synechococcus sp. (strain ATCC 27144 / PCC 6301 / SAUG 1402/1) (Anacystis nidulans) protein is Imidazole glycerol phosphate synthase subunit HisH.